We begin with the raw amino-acid sequence, 679 residues long: UvrABC system protein C (679 aa).

The GIY-YIG domain maps to 65 to 143 (NSPGVYRMLN…IKRLRPRFNV (79 aa)). Residues 253–288 (QKVKSHMAEAMNQAAEDLDFERAAIYRDRLAALSHV) enclose the UVR domain.

It belongs to the UvrC family. As to quaternary structure, interacts with UvrB in an incision complex.

It localises to the cytoplasm. The UvrABC repair system catalyzes the recognition and processing of DNA lesions. UvrC both incises the 5' and 3' sides of the lesion. The N-terminal half is responsible for the 3' incision and the C-terminal half is responsible for the 5' incision. The protein is UvrABC system protein C of Rhizobium etli (strain ATCC 51251 / DSM 11541 / JCM 21823 / NBRC 15573 / CFN 42).